The following is a 371-amino-acid chain: Peptide chain release factor 2 (371 aa).

Gln-252 bears the N5-methylglutamine mark.

This sequence belongs to the prokaryotic/mitochondrial release factor family. Methylated by PrmC. Methylation increases the termination efficiency of RF2.

The protein localises to the cytoplasm. In terms of biological role, peptide chain release factor 2 directs the termination of translation in response to the peptide chain termination codons UGA and UAA. The polypeptide is Peptide chain release factor 2 (Staphylococcus epidermidis (strain ATCC 35984 / DSM 28319 / BCRC 17069 / CCUG 31568 / BM 3577 / RP62A)).